Here is a 495-residue protein sequence, read N- to C-terminus: Probable leucine aminopeptidase 2 (495 aa).

Residues 1–21 (MKSQLLSLAVAVTTISQGVVG) form the signal peptide. The PA domain maps to 130-216 (MAELVVAKNN…SQEDGKNLAT (87 aa)). Asn142 and Asn235 each carry an N-linked (GlcNAc...) asparagine glycan. Zn(2+)-binding residues include His259 and Asp271. N-linked (GlcNAc...) asparagine glycosylation is present at Asn272. The Proton acceptor role is filled by Glu303. Zn(2+) contacts are provided by Glu304 and Asp332. The N-linked (GlcNAc...) asparagine glycan is linked to Asn352. His430 serves as a coordination point for Zn(2+).

It belongs to the peptidase M28 family. M28A subfamily. Monomer. Zn(2+) serves as cofactor.

The protein resides in the secreted. Functionally, extracellular aminopeptidase that releases a wide variety of amino acids from natural peptides and contributes to pathogenicity. This chain is Probable leucine aminopeptidase 2 (LAP2), found in Trichophyton verrucosum (strain HKI 0517).